A 233-amino-acid chain; its full sequence is Adenosylcobinamide-GDP ribazoletransferase (233 aa).

7 consecutive transmembrane segments (helical) span residues 24–44 (LWAFPLVALVSSALPTLVLYL), 46–66 (LPLSNVLAVLALYFTIGLLHL), 96–116 (IAGLFAVVMVLFLQVYSLQLV), 117–137 (PFYAIFLAELNSKLAMLLALA), 156–176 (SGQLLGGFIFYAILLVPVVVY), 184–204 (LLGLAFGGYAIKVALDNFGGI), and 209–229 (IGAIAEITRAGTLLVVAFAGA).

Belongs to the CobS family. Requires Mg(2+) as cofactor.

Its subcellular location is the cell membrane. The catalysed reaction is alpha-ribazole + adenosylcob(III)inamide-GDP = adenosylcob(III)alamin + GMP + H(+). The enzyme catalyses alpha-ribazole 5'-phosphate + adenosylcob(III)inamide-GDP = adenosylcob(III)alamin 5'-phosphate + GMP + H(+). It functions in the pathway cofactor biosynthesis; adenosylcobalamin biosynthesis; adenosylcobalamin from cob(II)yrinate a,c-diamide: step 7/7. Functionally, joins adenosylcobinamide-GDP and alpha-ribazole to generate adenosylcobalamin (Ado-cobalamin). Also synthesizes adenosylcobalamin 5'-phosphate from adenosylcobinamide-GDP and alpha-ribazole 5'-phosphate. The sequence is that of Adenosylcobinamide-GDP ribazoletransferase from Thermococcus onnurineus (strain NA1).